Reading from the N-terminus, the 294-residue chain is MHPRFQTAFAQLADNLQSALAPILADHHFPAMLTAEQVSTLKNTAGLDEDALAFALLPLAAACARTDLSHFNVGAIARGVSGNWYFGANMEFLGATMQQTVHAEQSAISHAWLRGEKGLAAVTVNYTPCGHCRQFMNELNSGLDLRIHLPGRAPHTLRDYLPDAFGPKDLEIKTLLMDEQDHGFTLTGDTLTQAAITAANKSHMPYSHSPSGVALECKDGRIFTGSYAENAAFNPTLPPLQGALNLLSLNGYNYADIQRAILAEKGDAALIQWDATAATLKALGCHNIDRVLLG.

2 CMP/dCMP-type deaminase domains span residues 48–168 (DEDA…FGPK) and 186–294 (LTGD…VLLG). 89 to 91 (NME) is a substrate binding site. Residue histidine 102 participates in Zn(2+) binding. Glutamate 104 acts as the Proton donor in catalysis. Residues cysteine 129 and cysteine 132 each coordinate Zn(2+).

It belongs to the cytidine and deoxycytidylate deaminase family. As to quaternary structure, homodimer. Zn(2+) serves as cofactor.

The catalysed reaction is cytidine + H2O + H(+) = uridine + NH4(+). It carries out the reaction 2'-deoxycytidine + H2O + H(+) = 2'-deoxyuridine + NH4(+). Its function is as follows. This enzyme scavenges exogenous and endogenous cytidine and 2'-deoxycytidine for UMP synthesis. This Salmonella agona (strain SL483) protein is Cytidine deaminase.